Reading from the N-terminus, the 228-residue chain is Death domain-containing membrane protein NRADD (228 aa).

At 1 to 52 (MLYNVSKGVVYSDTALQGQDGDREGMWVGAGGALAPNTSSLFPPEPPGASSN) the chain is on the extracellular side. N-linked (GlcNAc...) asparagine glycosylation is found at asparagine 4 and asparagine 37. Residues 53–73 (IIPVYCALLATVILGLLAYVA) form a helical; Signal-anchor for type III membrane protein membrane-spanning segment. The Cytoplasmic portion of the chain corresponds to 74 to 228 (FKCWRSHKQR…SSPAESSSVV (155 aa)). The disordered stretch occupies residues 87-122 (AKARTVELGDPDRDQRRGDSNVFVDSPPSLEPCIPS). Basic and acidic residues predominate over residues 90–105 (RTVELGDPDRDQRRGD). Residues 143 to 222 (EEVQRLLMMG…DVVQVLSSPA (80 aa)) enclose the Death domain.

As to quaternary structure, interacts with NGFR. Interacts with NTRK1. Interacts with SORT1. As to expression, detected in lung and testis.

The protein resides in the cell membrane. It is found in the nucleus. Its function is as follows. Modulates NTRK1 signaling. Can activate several intracellular signaling pathways, leading to activation of JUN. Promotes apoptosis. Promotes translocation of SORT1 to the cell membrane, and thereby hinders lysosomal degradation of SOTR1 and promotes its interaction with NGFR. The sequence is that of Death domain-containing membrane protein NRADD (Nradd) from Mus musculus (Mouse).